The sequence spans 360 residues: MAGPLSGLRVVELAGIGPGPHAAMILGDLGADVVRIDRPSSVDGISRDAMLRNRRIVTADLKSDQGLELALKLIAKADVLIEGYRPGVTERLGLGPEECAKVNDRLIYARMTGWGQTGPRSQQAGHDINYISLNGILHAIGRGDERPVPPLNLVGDFGGGSMFLLVGILAALWERQSSGKGQVVDAAMVDGSSVLIQMMWAMRATGMWTDTRGANMLDGGAPYYDTYECADGRYVAVGAIEPQFYAAMLAGLGLDAAELPPQNDRARWPELRALLTEAFASHDRDHWGAVFANSDACVTPVLAFGEVHNEPHIIERNTFYEANGGWQPMPAPRFSRTASSQPRPPAATIDIEAVLTDWDG.

Residues Arg38, Ala59–Lys62, Gly83–Arg85, Arg91, and Gly125–Tyr130 contribute to the substrate site. His126 serves as the catalytic Proton acceptor. Residue Asp156 is the Proton donor of the active site.

Belongs to the CoA-transferase III family. In terms of assembly, homodimer.

It catalyses the reaction a (2S)-2-methylacyl-CoA = a (2R)-2-methylacyl-CoA. The catalysed reaction is (2S)-2-methyltetradecanoyl-CoA = (2R)-2-methyltetradecanoyl-CoA. It carries out the reaction (2R)-pristanoyl-CoA = (2S)-pristanoyl-CoA. The enzyme catalyses (25S)-3-oxocholest-4-en-26-oyl-CoA = (25R)-3-oxocholest-4-en-26-oyl-CoA. It catalyses the reaction (2S)-ibuprofenoyl-CoA = (2R)-ibuprofenoyl-CoA. Its activity is regulated as follows. Inactivated by N,N-dialkylcarbamoyl-CoA substrate-product analogs. Functionally, catalyzes the epimerization of (2R)- and (2S)-methylacyl-coenzyme A (CoA) thioesters. Accepts as substrates a wide range of alpha-methylacyl-CoAs, including (2R)-2-methylmyristoyl-CoA and (2S)-2-methylmyristoyl-CoA, (2R)-pristanoyl-CoA and (2S)-pristanoyl-CoA, and the cholesterol esters (25R)-3-oxo-cholest-4-en-26-oyl-CoA and (25S)-3-oxo-cholest-4-en-26-oyl-CoA. Can also catalyze the interconversion of the non-physiologic substrates (2R)-ibuprofenoyl-CoA and (2S)-ibuprofenoyl-CoA, which are potential competitive inhibitors of the enzyme. This Mycobacterium tuberculosis (strain ATCC 25618 / H37Rv) protein is Alpha-methylacyl-CoA racemase.